A 319-amino-acid chain; its full sequence is Phospho-N-acetylmuramoyl-pentapeptide-transferase (319 aa).

Helical transmembrane passes span 5–25, 51–71, 79–99, 116–136, 149–169, 172–192, 197–217, 224–244, 252–272, and 299–319; these read LIPFISSFALTVIFLPLFIGF, TMGGVVFMLASVISTLWVLIW, TWILIIAFLGYGIIGFLDDGI, LGQIIIAALIIALAFSDHFAF, SFLFSLFVLFWLVGFSNAVNL, GLDGLATGLSIIAYATYAWIA, NWVIVAFTLSVIGGLVGFFIF, IFMGDAGSLALGGGLATVSIF, LLIGIVFVLETLSVILQVISF, and VDIVFWIVGLIGSIIYLIIWG.

The protein belongs to the glycosyltransferase 4 family. MraY subfamily. Mg(2+) serves as cofactor.

The protein resides in the cell membrane. The catalysed reaction is UDP-N-acetyl-alpha-D-muramoyl-L-alanyl-gamma-D-glutamyl-L-lysyl-D-alanyl-D-alanine + di-trans,octa-cis-undecaprenyl phosphate = Mur2Ac(oyl-L-Ala-gamma-D-Glu-L-Lys-D-Ala-D-Ala)-di-trans,octa-cis-undecaprenyl diphosphate + UMP. Its pathway is cell wall biogenesis; peptidoglycan biosynthesis. Catalyzes the initial step of the lipid cycle reactions in the biosynthesis of the cell wall peptidoglycan: transfers peptidoglycan precursor phospho-MurNAc-pentapeptide from UDP-MurNAc-pentapeptide onto the lipid carrier undecaprenyl phosphate, yielding undecaprenyl-pyrophosphoryl-MurNAc-pentapeptide, known as lipid I. This chain is Phospho-N-acetylmuramoyl-pentapeptide-transferase, found in Lactobacillus gasseri (strain ATCC 33323 / DSM 20243 / BCRC 14619 / CIP 102991 / JCM 1131 / KCTC 3163 / NCIMB 11718 / NCTC 13722 / AM63).